Consider the following 382-residue polypeptide: Processive diacylglycerol beta-glucosyltransferase (382 aa).

The protein belongs to the glycosyltransferase 28 family. UgtP subfamily.

The protein localises to the cell membrane. The enzyme catalyses a 1,2-diacyl-3-O-(beta-D-glucopyranosyl)-sn-glycerol + UDP-alpha-D-glucose = a 1,2-diacyl-3-O-(beta-D-Glc-(1-&gt;6)-beta-D-Glc)-sn-glycerol + UDP + H(+). It catalyses the reaction a 1,2-diacyl-3-O-(beta-D-Glc-(1-&gt;6)-beta-D-Glc)-sn-glycerol + UDP-alpha-D-glucose = a 1,2-diacyl-3-O-(beta-D-Glc-(1-&gt;6)-beta-D-Glc-(1-&gt;6)-beta-D-Glc)-sn-glycerol + UDP + H(+). The catalysed reaction is a 1,2-diacyl-sn-glycerol + UDP-alpha-D-glucose = a 1,2-diacyl-3-O-(beta-D-glucopyranosyl)-sn-glycerol + UDP + H(+). It functions in the pathway glycolipid metabolism; diglucosyl-diacylglycerol biosynthesis. Functionally, processive glucosyltransferase involved in the biosynthesis of both the bilayer- and non-bilayer-forming membrane glucolipids. Is able to successively transfer up to three glucosyl residues to diacylglycerol (DAG), thereby catalyzing the formation of beta-monoglucosyl-DAG (3-O-(beta-D-glucopyranosyl)-1,2-diacyl-sn-glycerol), beta-diglucosyl-DAG (3-O-(beta-D-glucopyranosyl-beta-(1-&gt;6)-D-glucopyranosyl)-1,2-diacyl-sn-glycerol) and beta-triglucosyl-DAG (3-O-(beta-D-glucopyranosyl-beta-(1-&gt;6)-D-glucopyranosyl-beta-(1-&gt;6)-D-glucopyranosyl)-1,2-diacyl-sn-glycerol). Beta-diglucosyl-DAG is the predominant glycolipid found in Bacillales and is also used as a membrane anchor for lipoteichoic acid (LTA). Also seems to be able to form beta-tetraglucosyl-DAG, although this glycolipid has not been found in B.subtilis membrane. UgtP can only use UDP-glucose as sugar donor. The protein is Processive diacylglycerol beta-glucosyltransferase of Bacillus subtilis (strain 168).